A 293-amino-acid chain; its full sequence is MAAASGASPQSEYIQHHLVHLNNLGEKQSVIAQFNVINYDSLFWSGLMGLIVIFCLWLAARRATAGVPGRFQGFVEMIVDMVNDQAKGIVQNAKSREFVAPLALTVFLWIILMNALDLLPVDLFPTIWRVTGLGAEHGDPLYYHRILPTADLNVPMGMSLGVLLLMFYYGIKIKHPAGFVKELFTAPFHAHGLAALVLAPFNLLLNLIEYAAKSVSLGMRLFGNMFAGELIFMLIALLGGAWTGFNASSIGLGIGHVLAGSVWAIFHILIVLLQAFIFMMLTLVYIGQAHEGH.

6 consecutive transmembrane segments (helical) span residues 40 to 60 (DSLFWSGLMGLIVIFCLWLAA), 98 to 118 (FVAPLALTVFLWIILMNALDL), 151 to 171 (DLNVPMGMSLGVLLLMFYYGI), 188 to 208 (FHAHGLAALVLAPFNLLLNLI), 225 to 245 (MFAGELIFMLIALLGGAWTGF), and 264 to 284 (AIFHILIVLLQAFIFMMLTLV).

The protein belongs to the ATPase A chain family. F-type ATPases have 2 components, CF(1) - the catalytic core - and CF(0) - the membrane proton channel. CF(1) has five subunits: alpha(3), beta(3), gamma(1), delta(1), epsilon(1). CF(0) has three main subunits: a(1), b(2) and c(9-12). The alpha and beta chains form an alternating ring which encloses part of the gamma chain. CF(1) is attached to CF(0) by a central stalk formed by the gamma and epsilon chains, while a peripheral stalk is formed by the delta and b chains.

It localises to the cell inner membrane. In terms of biological role, key component of the proton channel; it plays a direct role in the translocation of protons across the membrane. In Bordetella avium (strain 197N), this protein is ATP synthase subunit a.